The following is a 433-amino-acid chain: Serine hydroxymethyltransferase (433 aa).

121 to 123 (AHV) is a (6S)-5,6,7,8-tetrahydrofolate binding site. Residue lysine 227 is modified to N6-(pyridoxal phosphate)lysine. Residue glutamate 243 coordinates (6S)-5,6,7,8-tetrahydrofolate.

Belongs to the SHMT family. In terms of assembly, homodimer. The cofactor is pyridoxal 5'-phosphate.

Its subcellular location is the cytoplasm. Its pathway is amino-acid biosynthesis; glycine biosynthesis; glycine from L-serine: step 1/1. Functionally, catalyzes the reversible interconversion of serine and glycine with a modified folate serving as the one-carbon carrier. Also exhibits a pteridine-independent aldolase activity toward beta-hydroxyamino acids, producing glycine and aldehydes, via a retro-aldol mechanism. This is Serine hydroxymethyltransferase from Saccharolobus islandicus (strain L.S.2.15 / Lassen #1) (Sulfolobus islandicus).